The primary structure comprises 550 residues: Carnitine transporter (550 aa).

12 helical membrane passes run 15–35 (FLAV…AIYS), 53–73 (FTTP…GLAF), 92–112 (SWIF…WGFL), 137–157 (VAYS…LASI), 196–216 (MFLL…AVTF), 230–250 (FMTK…SSYV), 263–283 (VCLG…TQFI), 317–337 (WTVF…LFVT), 347–367 (EVIF…FGVF), 401–421 (LLPA…VFLA), 451–471 (LFWC…KAPL), and 477–497 (ATIV…YGLV).

This sequence belongs to the BCCT transporter (TC 2.A.15) family.

It localises to the cell inner membrane. With respect to regulation, inhibited by the protonophore 3,3',4',5-tetrachlorosalicylanilide (TCS). Not activated by osmolarity. Functionally, catalyzes the energy-dependent uptake of carnitine and is essential for growth on carnitine. Can also mediate the uptake of choline. Is probably a proton:substrate symporter. This chain is Carnitine transporter, found in Acinetobacter baumannii (strain ATCC 19606 / DSM 30007 / JCM 6841 / CCUG 19606 / CIP 70.34 / NBRC 109757 / NCIMB 12457 / NCTC 12156 / 81).